A 317-amino-acid polypeptide reads, in one-letter code: tRNA-cytidine(32) 2-sulfurtransferase (317 aa).

The PP-loop motif motif lies at 63–68 (SGGKDS). [4Fe-4S] cluster is bound by residues cysteine 138, cysteine 141, and cysteine 229.

It belongs to the TtcA family. As to quaternary structure, homodimer. Mg(2+) serves as cofactor. [4Fe-4S] cluster is required as a cofactor.

The protein localises to the cytoplasm. It catalyses the reaction cytidine(32) in tRNA + S-sulfanyl-L-cysteinyl-[cysteine desulfurase] + AH2 + ATP = 2-thiocytidine(32) in tRNA + L-cysteinyl-[cysteine desulfurase] + A + AMP + diphosphate + H(+). It functions in the pathway tRNA modification. Its function is as follows. Catalyzes the ATP-dependent 2-thiolation of cytidine in position 32 of tRNA, to form 2-thiocytidine (s(2)C32). The sulfur atoms are provided by the cysteine/cysteine desulfurase (IscS) system. The chain is tRNA-cytidine(32) 2-sulfurtransferase from Janthinobacterium sp. (strain Marseille) (Minibacterium massiliensis).